A 655-amino-acid chain; its full sequence is p-hydroxybenzoic acid efflux pump subunit AaeB (655 aa).

Residues 1–12 lie on the Periplasmic side of the membrane; that stretch reads MGIFSIANQHIR. The helical transmembrane segment at 13-33 threads the bilayer; that stretch reads FAVKLATAIVLALFVGFHFQL. At 34–37 the chain is on the cytoplasmic side; the sequence is ETPR. Residues 38–58 form a helical membrane-spanning segment; that stretch reads WAVLTAAIVAAGTAFAAGGEP. Over 59–68 the chain is Periplasmic; that stretch reads YSGAIRYRGF. The chain crosses the membrane as a helical span at residues 69-89; it reads LRIIGTFIGCIAGLVIIIAMI. The Cytoplasmic portion of the chain corresponds to 90-92; the sequence is RAP. Residues 93–113 form a helical membrane-spanning segment; the sequence is LLMILVCCIWAGFCTWISSLV. Over 114–120 the chain is Periplasmic; it reads RIENSYA. Residues 121–141 form a helical membrane-spanning segment; sequence WGLAGYTALIIVITIQPEPLL. The Cytoplasmic segment spans residues 142 to 151; sequence TPQFAVERCS. The chain crosses the membrane as a helical span at residues 152 to 172; sequence EIVIGIVCAIMADLLFSPRSI. At 173–369 the chain is on the periplasmic side; that stretch reads KQEVDRELES…RTTLSCILGT (197 aa). A helical transmembrane segment spans residues 370–390; the sequence is LFWLWTGWTSGSGAMVMIAVV. Residues 391-406 are Cytoplasmic-facing; sequence TSLAMRLPNPRMVAID. Residues 407 to 427 traverse the membrane as a helical segment; the sequence is FIYGTLAALPLGLLYFLVIIP. The Periplasmic portion of the chain corresponds to 428–430; sequence NTQ. A helical transmembrane segment spans residues 431 to 451; that stretch reads QSMLLLCISLAVLGFFLGIEV. Over 452–458 the chain is Cytoplasmic; sequence QKRRLGS. Residues 459 to 479 traverse the membrane as a helical segment; sequence MGALASTINIIVLDNPMTFHF. Over 480–481 the chain is Periplasmic; it reads SQ. The chain crosses the membrane as a helical span at residues 482-502; sequence FLDSALGQIVGCVLAFTVILL. Topologically, residues 503–655 are cytoplasmic; it reads VRDKSRDRTG…HKYQHALTDS (153 aa).

Belongs to the aromatic acid exporter ArAE (TC 2.A.85) family.

The protein localises to the cell inner membrane. Forms an efflux pump with AaeA. Could function as a metabolic relief valve, allowing to eliminate certain compounds when they accumulate to high levels in the cell. Substrates are p-hydroxybenzoic acid (pHBA), 6-hydroxy-2-naphthoic and 2-hydroxycinnamate. In Escherichia coli (strain K12), this protein is p-hydroxybenzoic acid efflux pump subunit AaeB.